A 632-amino-acid polypeptide reads, in one-letter code: Extracellular metalloproteinase 2 (632 aa).

The N-terminal stretch at 1-19 (MHGLLLAGLAAALPLGVAG) is a signal peptide. Positions 20–244 (LPARQQSGLS…VHNVVDYVAS (225 aa)) are excised as a propeptide. Asn-270 carries N-linked (GlcNAc...) asparagine glycosylation. His-429 contacts Zn(2+). Residue Glu-430 is part of the active site. Zn(2+) is bound at residue His-433.

This sequence belongs to the peptidase M36 family. Requires Zn(2+) as cofactor.

Its subcellular location is the secreted. In terms of biological role, secreted metalloproteinase probably acting as a virulence factor. This chain is Extracellular metalloproteinase 2 (MEP2), found in Arthroderma benhamiae (Trichophyton mentagrophytes).